We begin with the raw amino-acid sequence, 514 residues long: H/ACA ribonucleoprotein complex subunit DKC1 (514 aa).

An N-acetylalanine modification is found at Ala2. The segment at 2-21 is nucleolar localization; sequence ADAEVIILPKKHKKKKERKS. Residue Lys20 forms a Glycyl lysine isopeptide (Lys-Gly) (interchain with G-Cter in SUMO2) linkage. Position 21 is a phosphoserine (Ser21). Residues Lys39 and Lys43 each participate in a glycyl lysine isopeptide (Lys-Gly) (interchain with G-Cter in SUMO2) cross-link. The active-site Nucleophile is Asp125. Residue Lys191 forms a Glycyl lysine isopeptide (Lys-Gly) (interchain with G-Cter in SUMO2) linkage. The PUA domain maps to 296-371; it reads HKRLVMKDSA…IVAKIKRVIM (76 aa). At Ser387 the chain carries Phosphoserine. Lys394 participates in a covalent cross-link: Glycyl lysine isopeptide (Lys-Gly) (interchain with G-Cter in SUMO2). Lys413 participates in a covalent cross-link: Glycyl lysine isopeptide (Lys-Gly) (interchain with G-Cter in SUMO1); alternate. Lys413 is covalently cross-linked (Glycyl lysine isopeptide (Lys-Gly) (interchain with G-Cter in SUMO2); alternate). Glycyl lysine isopeptide (Lys-Gly) (interchain with G-Cter in SUMO2) cross-links involve residues Lys424 and Lys433. The tract at residues 443–514 is disordered; that stretch reads KTAKRKRESE…KAKEVELVSE (72 aa). A nuclear and nucleolar localization region spans residues 446–514; sequence KRKRESESES…KAKEVELVSE (69 aa). 3 positions are modified to phosphoserine: Ser451, Ser453, and Ser455. Phosphothreonine is present on Thr458. Lys467 participates in a covalent cross-link: Glycyl lysine isopeptide (Lys-Gly) (interchain with G-Cter in SUMO2). The segment covering 468–480 has biased composition (basic residues); it reads KEKKKSKKDKKAK. 3 positions are modified to phosphoserine: Ser485, Ser494, and Ser513.

It belongs to the pseudouridine synthase TruB family. In terms of assembly, part of the H/ACA small nucleolar ribonucleoprotein (H/ACA snoRNP) complex, which contains NHP2/NOLA2, GAR1/NOLA1, NOP10/NOLA3, and DKC1/NOLA4, which is presumed to be the catalytic subunit. The complex contains a stable core formed by binding of one or two NOP10-DKC1 heterodimers to NHP2; GAR1 subsequently binds to this core via DKC1. The complex binds a box H/ACA small nucleolar RNA (snoRNA), which may target the specific site of modification within the RNA substrate. During assembly, the complex contains NAF1 instead of GAR1/NOLA1. The complex also interacts with TERC, which contains a 3'-terminal domain related to the box H/ACA snoRNAs. Specific interactions with snoRNAs or TERC are mediated by GAR1 and NHP2. Associates with NOLC1/NOPP140. H/ACA snoRNPs interact with the SMN complex, consisting of SMN1 or SMN2, GEMIN2/SIP1, DDX20/GEMIN3, and GEMIN4. This is mediated by interaction between GAR1 and SMN1 or SMN2. The SMN complex may be required for correct assembly of the H/ACA snoRNP complex. Component of the telomerase holoenzyme complex composed of one molecule of TERT, one molecule of WRAP53/TCAB1, two molecules of H/ACA ribonucleoprotein complex subunits DKC1, NOP10, NHP2 and GAR1, and a telomerase RNA template component (TERC). The telomerase holoenzyme complex is associated with TEP1, SMG6/EST1A and POT1. Interacts with SHQ1; this interaction may lead to the stabilization of DKC1, from the time of its synthesis until its association with NOP10, NHP2, and NAF1 at the nascent H/ACA RNA. Interacts with HMBOX1. Interacts with DHX36. In terms of tissue distribution, ubiquitously expressed.

The protein resides in the nucleus. It is found in the nucleolus. It localises to the cajal body. Its subcellular location is the cytoplasm. It catalyses the reaction uridine in 5S rRNA = pseudouridine in 5S rRNA. Its function is as follows. Catalytic subunit of H/ACA small nucleolar ribonucleoprotein (H/ACA snoRNP) complex, which catalyzes pseudouridylation of rRNA. This involves the isomerization of uridine such that the ribose is subsequently attached to C5, instead of the normal N1. Each rRNA can contain up to 100 pseudouridine ('psi') residues, which may serve to stabilize the conformation of rRNAs. Required for ribosome biogenesis and telomere maintenance. Also required for correct processing or intranuclear trafficking of TERC, the RNA component of the telomerase reverse transcriptase (TERT) holoenzyme. Functionally, promotes cell to cell and cell to substratum adhesion, increases the cell proliferation rate and leads to cytokeratin hyper-expression. The sequence is that of H/ACA ribonucleoprotein complex subunit DKC1 from Homo sapiens (Human).